Reading from the N-terminus, the 263-residue chain is Chymotrypsinogen B (263 aa).

The N-terminal stretch at 1–18 (MASLWLLSCFSLVGAAFG) is a signal peptide. Cystine bridges form between cysteine 19-cysteine 140, cysteine 60-cysteine 76, cysteine 154-cysteine 219, cysteine 186-cysteine 200, and cysteine 209-cysteine 238. Residues 34–261 (IVNGEDAVPG…LIPWVQKILA (228 aa)) form the Peptidase S1 domain. The active-site Charge relay system is the histidine 75. Phosphoserine is present on serine 93. Catalysis depends on aspartate 120, which acts as the Charge relay system. Serine 213 (charge relay system) is an active-site residue.

Belongs to the peptidase S1 family.

Its subcellular location is the secreted. It localises to the extracellular space. The enzyme catalyses Preferential cleavage: Tyr-|-Xaa, Trp-|-Xaa, Phe-|-Xaa, Leu-|-Xaa.. This Homo sapiens (Human) protein is Chymotrypsinogen B.